Consider the following 241-residue polypeptide: DnaA regulatory inactivator Hda (241 aa).

This sequence belongs to the DnaA family. HdA subfamily. The active form seems to be an ADP-bound monomer. Forms the RIDA complex (regulatory inactivation of DnaA) of ATP-DnaA, ADP-Hda and the DNA-loaded beta sliding clamp (dnaN).

Functionally, mediates the interaction of DNA replication initiator protein DnaA with DNA polymerase subunit beta sliding clamp (dnaN). Stimulates hydrolysis of ATP-DnaA to ADP-DnaA, rendering DnaA inactive for reinitiation, a process called regulatory inhibition of DnaA or RIDA. The sequence is that of DnaA regulatory inactivator Hda from Salmonella paratyphi A (strain ATCC 9150 / SARB42).